Consider the following 572-residue polypeptide: Proteinaceous RNase P 1, chloroplastic/mitochondrial (572 aa).

Residues Met1–Ala70 constitute a chloroplast and mitochondrion transit peptide. PPR repeat units follow at residues Pro96–Leu130, Asn136–Pro174, Asn175–Pro209, and Arg210–Pro244. One can recognise a PRORP domain in the interval Met338–Cys565. Zn(2+)-binding residues include Cys344 and Cys347. Mn(2+) is bound by residues Asp399, Asp474, Asp475, and Asp493. 2 residues coordinate Zn(2+): His548 and Cys565.

It belongs to the PPR family. P subfamily. Mg(2+) serves as cofactor. Mn(2+) is required as a cofactor.

It is found in the mitochondrion. The protein resides in the plastid. It localises to the chloroplast. The catalysed reaction is Endonucleolytic cleavage of RNA, removing 5'-extranucleotides from tRNA precursor.. Functionally, endonuclease RNase P responsible for the 5' maturation of tRNA precursors. Preferentially cleaves at the unusual cleavage site, but also able to cleave at the classical cleavage site. Also involved in the maturation of mRNAs in mitochondria. The sequence is that of Proteinaceous RNase P 1, chloroplastic/mitochondrial (PRORP1) from Arabidopsis thaliana (Mouse-ear cress).